Consider the following 611-residue polypeptide: Acetylcholinesterase (611 aa).

A signal peptide spans 1 to 31; that stretch reads MRPPWCPLYTPSLAAPILLLLLFLLGGGAEA. Cys-97 and Cys-124 are disulfide-bonded. Ser-231 functions as the Acyl-ester intermediate in the catalytic mechanism. A disulfide bridge links Cys-285 with Cys-300. Residue Asn-293 is glycosylated (N-linked (GlcNAc...) asparagine). Glu-362 serves as the catalytic Charge relay system. Residue Asn-378 is glycosylated (N-linked (GlcNAc...) asparagine). Cys-437 and Cys-557 are oxidised to a cystine. His-475 acts as the Charge relay system in catalysis. Residue Asn-492 is glycosylated (N-linked (GlcNAc...) asparagine).

Belongs to the type-B carboxylesterase/lipase family. As to quaternary structure, interacts with PRIMA1. The interaction with PRIMA1 is required to anchor it to the basal lamina of cells and organize into tetramers. Isoform H generates GPI-anchored dimers; disulfide linked. Isoform T generates multiple structures, ranging from monomers and dimers to collagen-tailed and hydrophobic-tailed forms, in which catalytic tetramers are associated with anchoring proteins that attach them to the basal lamina or to cell membranes. In the collagen-tailed forms, isoform T subunits are associated with a specific collagen, COLQ, which triggers the formation of isoform T tetramers, from monomers and dimers.

The protein resides in the synapse. It localises to the secreted. Its subcellular location is the cell membrane. It carries out the reaction acetylcholine + H2O = choline + acetate + H(+). Its function is as follows. Terminates signal transduction at the neuromuscular junction by rapid hydrolysis of the acetylcholine released into the synaptic cleft. The sequence is that of Acetylcholinesterase (ACHE) from Felis catus (Cat).